The chain runs to 671 residues: UvrABC system protein B (671 aa).

The Helicase ATP-binding domain maps to 25–412 (EGIEAGLAHQ…AGRVVEQVVR (388 aa)). ATP is bound at residue 38 to 45 (GVTGSGKT). Residues 91 to 114 (YYDYYQPEAYVPSSDTFIEKDASI) carry the Beta-hairpin motif. Residues 429–582 (QVDDLLSEIT…QIAFNLANGI (154 aa)) form the Helicase C-terminal domain. The interval 601-623 (PGSRSKKRKGMAKAAEENARYEN) is disordered. The segment covering 614–623 (AAEENARYEN) has biased composition (basic and acidic residues). The UVR domain maps to 632–667 (TKRIRQLEEKMYQLARDLEFEAAAQMRDEITKLRER).

It belongs to the UvrB family. In terms of assembly, forms a heterotetramer with UvrA during the search for lesions. Interacts with UvrC in an incision complex.

The protein resides in the cytoplasm. Functionally, the UvrABC repair system catalyzes the recognition and processing of DNA lesions. A damage recognition complex composed of 2 UvrA and 2 UvrB subunits scans DNA for abnormalities. Upon binding of the UvrA(2)B(2) complex to a putative damaged site, the DNA wraps around one UvrB monomer. DNA wrap is dependent on ATP binding by UvrB and probably causes local melting of the DNA helix, facilitating insertion of UvrB beta-hairpin between the DNA strands. Then UvrB probes one DNA strand for the presence of a lesion. If a lesion is found the UvrA subunits dissociate and the UvrB-DNA preincision complex is formed. This complex is subsequently bound by UvrC and the second UvrB is released. If no lesion is found, the DNA wraps around the other UvrB subunit that will check the other stand for damage. In Pseudomonas fluorescens (strain ATCC BAA-477 / NRRL B-23932 / Pf-5), this protein is UvrABC system protein B.